A 378-amino-acid polypeptide reads, in one-letter code: GTP 3',8-cyclase 3 (378 aa).

One can recognise a Radical SAM core domain in the interval 40 to 259 (RCGRTMGDLR…STLGKKYGPI (220 aa)). Residue Arg-49 participates in GTP binding. Residues Cys-56 and Cys-60 each coordinate [4Fe-4S] cluster. An S-adenosyl-L-methionine-binding site is contributed by Tyr-62. Residue Cys-63 participates in [4Fe-4S] cluster binding. Arg-99 provides a ligand contact to GTP. Gly-103 contributes to the S-adenosyl-L-methionine binding site. Thr-134 provides a ligand contact to GTP. Residue Ser-158 participates in S-adenosyl-L-methionine binding. Lys-195 contributes to the GTP binding site. Residue Met-229 coordinates S-adenosyl-L-methionine. [4Fe-4S] cluster is bound by residues Cys-292 and Cys-295. Residue 297–299 (RSR) participates in GTP binding. Cys-309 is a [4Fe-4S] cluster binding site.

This sequence belongs to the radical SAM superfamily. MoaA family. Monomer and homodimer. Requires [4Fe-4S] cluster as cofactor.

It carries out the reaction GTP + AH2 + S-adenosyl-L-methionine = (8S)-3',8-cyclo-7,8-dihydroguanosine 5'-triphosphate + 5'-deoxyadenosine + L-methionine + A + H(+). It participates in cofactor biosynthesis; molybdopterin biosynthesis. In terms of biological role, catalyzes the cyclization of GTP to (8S)-3',8-cyclo-7,8-dihydroguanosine 5'-triphosphate. The chain is GTP 3',8-cyclase 3 from Mycobacterium bovis (strain ATCC BAA-935 / AF2122/97).